The sequence spans 475 residues: UDP-glycosyltransferase 76E1 (475 aa).

The active-site Proton acceptor is H19. H19 provides a ligand contact to an anthocyanidin. The active-site Charge relay is the D109. UDP-alpha-D-glucose-binding residues include T131, A329, Q331, H346, W349, N350, S351, and E354. A369 is an an anthocyanidin binding site. D370 and Q371 together coordinate UDP-alpha-D-glucose.

The protein belongs to the UDP-glycosyltransferase family. As to expression, expressed in flowers and fruits.

It localises to the cytoplasm. The protein resides in the nucleus. It carries out the reaction 2-cis-(+)-abscisate + UDP-alpha-D-glucose = beta-D-glucopyranosyl cis-(+)-abscisate + UDP. Its function is as follows. Glucosyltransferase acting on abscisic acid (ABA) but not on auxin (IAA). The polypeptide is UDP-glycosyltransferase 76E1 (Solanum lycopersicum (Tomato)).